The primary structure comprises 265 residues: Urease accessory protein UreH (265 aa).

It belongs to the UreD family. UreH, UreF and UreG form a complex that acts as a GTP-hydrolysis-dependent molecular chaperone, activating the urease apoprotein by helping to assemble the nickel containing metallocenter of UreC. The UreE protein probably delivers the nickel.

It is found in the cytoplasm. In terms of biological role, required for maturation of urease via the functional incorporation of the urease nickel metallocenter. The polypeptide is Urease accessory protein UreH (Helicobacter pylori (strain J99 / ATCC 700824) (Campylobacter pylori J99)).